The following is a 994-amino-acid chain: Alanine--tRNA ligase, chloroplastic/mitochondrial (994 aa).

The segment at 1–29 is disordered; that stretch reads MGGLKLPPQTLHGIHGGRRPLTAPSSKPS. Zn(2+) contacts are provided by His672, His676, Cys774, and His778.

This sequence belongs to the class-II aminoacyl-tRNA synthetase family. As to quaternary structure, monomer. Zn(2+) is required as a cofactor.

Its subcellular location is the plastid. The protein localises to the chloroplast. It is found in the mitochondrion. The enzyme catalyses tRNA(Ala) + L-alanine + ATP = L-alanyl-tRNA(Ala) + AMP + diphosphate. Its function is as follows. Catalyzes the attachment of alanine to tRNA(Ala) in a two-step reaction: alanine is first activated by ATP to form Ala-AMP and then transferred to the acceptor end of tRNA(Ala). Also edits incorrectly charged tRNA(Ala) via its editing domain. This Populus trichocarpa (Western balsam poplar) protein is Alanine--tRNA ligase, chloroplastic/mitochondrial.